The sequence spans 126 residues: Glycine cleavage system H protein (126 aa).

Residues 21–103 (TVTIGISEHA…YEGGWIVKVK (83 aa)) enclose the Lipoyl-binding domain. At Lys-62 the chain carries N6-lipoyllysine.

This sequence belongs to the GcvH family. In terms of assembly, the glycine cleavage system is composed of four proteins: P, T, L and H. (R)-lipoate is required as a cofactor.

Functionally, the glycine cleavage system catalyzes the degradation of glycine. The H protein shuttles the methylamine group of glycine from the P protein to the T protein. The chain is Glycine cleavage system H protein from Vibrio parahaemolyticus serotype O3:K6 (strain RIMD 2210633).